The following is a 400-amino-acid chain: Acetate kinase (400 aa).

Asn7 is a binding site for Mg(2+). Lys14 lines the ATP pocket. Arg92 is a binding site for substrate. Asp149 functions as the Proton donor/acceptor in the catalytic mechanism. ATP is bound by residues 209-213, 283-285, and 331-335; these read HLGNG, DAR, and GMGEN. Residue Glu385 coordinates Mg(2+).

Belongs to the acetokinase family. Homodimer. Mg(2+) serves as cofactor. Mn(2+) is required as a cofactor.

Its subcellular location is the cytoplasm. It carries out the reaction acetate + ATP = acetyl phosphate + ADP. It participates in metabolic intermediate biosynthesis; acetyl-CoA biosynthesis; acetyl-CoA from acetate: step 1/2. Catalyzes the formation of acetyl phosphate from acetate and ATP. Can also catalyze the reverse reaction. This is Acetate kinase from Helicobacter acinonychis (strain Sheeba).